The chain runs to 359 residues: Glyceraldehyde-3-phosphate dehydrogenase, glycosomal (359 aa).

NAD(+)-binding positions include 12–13 (RI), Asp-38, Gln-91, and Ser-134. D-glyceraldehyde 3-phosphate is bound by residues 165–167 (SCT), Thr-197, 226–227 (TG), and Arg-249. Cys-166 serves as the catalytic Nucleophile. NAD(+) is bound at residue Asn-335. A Microbody targeting signal motif is present at residues 357 to 359 (ARL).

It belongs to the glyceraldehyde-3-phosphate dehydrogenase family. In terms of assembly, homotetramer.

Its subcellular location is the glycosome. It carries out the reaction D-glyceraldehyde 3-phosphate + phosphate + NAD(+) = (2R)-3-phospho-glyceroyl phosphate + NADH + H(+). It functions in the pathway carbohydrate degradation; glycolysis; pyruvate from D-glyceraldehyde 3-phosphate: step 1/5. This chain is Glyceraldehyde-3-phosphate dehydrogenase, glycosomal, found in Trypanosoma cruzi.